A 347-amino-acid chain; its full sequence is Phenylalanine--tRNA ligase alpha subunit (347 aa).

Residue E268 participates in Mg(2+) binding.

The protein belongs to the class-II aminoacyl-tRNA synthetase family. Phe-tRNA synthetase alpha subunit type 1 subfamily. As to quaternary structure, tetramer of two alpha and two beta subunits. Mg(2+) is required as a cofactor.

It is found in the cytoplasm. The catalysed reaction is tRNA(Phe) + L-phenylalanine + ATP = L-phenylalanyl-tRNA(Phe) + AMP + diphosphate + H(+). In Leptothrix cholodnii (strain ATCC 51168 / LMG 8142 / SP-6) (Leptothrix discophora (strain SP-6)), this protein is Phenylalanine--tRNA ligase alpha subunit.